The sequence spans 147 residues: Hemoglobin subunit beta (147 aa).

An N-acetylvaline modification is found at Val-2. One can recognise a Globin domain in the interval 3 to 147 (HLTGEEKSAV…VANALAHKYH (145 aa)). Thr-13 carries the post-translational modification Phosphothreonine. Ser-45 carries the phosphoserine modification. At Lys-60 the chain carries N6-acetyllysine. His-64 lines the heme b pocket. An N6-acetyllysine modification is found at Lys-83. Residue His-93 coordinates heme b. Cys-94 is modified (S-nitrosocysteine). Position 145 is an N6-acetyllysine (Lys-145).

Belongs to the globin family. In terms of assembly, heterotetramer of two alpha chains and two beta chains. As to expression, red blood cells.

In terms of biological role, involved in oxygen transport from the lung to the various peripheral tissues. The polypeptide is Hemoglobin subunit beta (HBB) (Callimico goeldii (Goeldi's marmoset)).